The chain runs to 533 residues: Cytochrome P450 monooxygenase ltmK (533 aa).

A helical membrane pass occupies residues 27–47 (VHWLQVIVALLVLIVCIFLYW). Residue Asn-116 is glycosylated (N-linked (GlcNAc...) asparagine). Heme is bound at residue Cys-473. Asn-528 carries N-linked (GlcNAc...) asparagine glycosylation.

The protein belongs to the cytochrome P450 family. Heme is required as a cofactor.

It localises to the membrane. It functions in the pathway secondary metabolite biosynthesis. Cytochrome P450 monooxygenase; part of the gene clusters that mediates the biosynthesis of lolitrems, indole-diterpene mycotoxins that are potent tremorgens in mammals, and are synthesized by clavicipitaceous fungal endophytes in association with their grass hosts. The geranylgeranyl diphosphate (GGPP) synthase ltmG is proposed to catalyze the first step in lolitrem biosynthesis. LtmG catalyzes a series of iterative condensations of isopentenyl diphosphate (IPP) with dimethylallyl diphosphate (DMAPP), geranyl diphosphate (GPP), and farnesyl diphosphate (FPP), to form GGPP. GGPP then condenses with indole-3-glycerol phosphate to form 3-geranylgeranylindole, an acyclic intermediate, to be incorporated into paxilline. Either ltmG or ltmC could be responsible for this step, as both are putative prenyl transferases. The FAD-dependent monooxygenase ltmM then catalyzes the epoxidation of the two terminal alkenes of the geranylgeranyl moiety, which is subsequently cyclized by ltmB, to paspaline. The cytochrome P450 monooxygenases ltmQ and ltmP can sequentially oxidize paspaline to terpendole E and terpendole F. Alternatively, ltmP converts paspaline to an intermediate which is oxidized by ltmQ to terpendole F. LtmF, ltmK, ltmE and ltmJ appear to be unique to the epichloe endophytes. The prenyltransferase ltmF is involved in the 27-hydroxyl-O-prenylation. The cytochrome P450 monooxygenase ltmK is required for the oxidative acetal ring formation. The multi-functional prenyltransferase ltmE is required for C20- and C21-prenylations of the indole ring of paspalanes and acts together with the cytochrome P450 monooxygenase ltmJ to yield lolitremanes by multiple oxidations and ring closures. The stereoisomer pairs of lolitriol and lolitrem N or lolitrem B and lolitrem F may be attributed to variations in the way in which ring closure can occur under the action of ltmJ. While the major product of this pathway is lolitrem B, the prenyl transferases and cytochrome P450 monooxygenases identified in this pathway have a remarkable versatility in their regio- and stereo-specificities to generate a diverse range of metabolites that are products of a metabolic grid rather than a linear pathway. This Epichloe festucae var. lolii (Neotyphodium lolii) protein is Cytochrome P450 monooxygenase ltmK.